The chain runs to 506 residues: MASQQAPAKDLQTNNLEFTPTDSSGVQWAEDISNSPSAQLNFSPSNNGCWATQELQSLWKMFNSWLQPEKQTKEQMISQLVLEQFLLTGHCKDKYALTEKWKASGSDMRRFMESLTDECLKPPVMVHVSMQGQEALFSENMPLKEVIKLLKQQQSATRPTPDNEQMPVDTTQDRLLATGQENSENECNNSCNATEANVGESCSGNEMDSLLIMQKEQHPEHEEGNVVCQFPHGARRASQGTPSHHVDFPSAPTTADVPMEEQPKDLSRENISEDKNNCYNTSRNAATQVYSGDNIPRNKSDSLFINKRIYHPEPEVGDIPYGVPQDSTRASQGTSTCLQESLGECFSEKDPREVPGLQSRQEQLISDPVLLGKNHEANLPCESHQKRFCRDAKLYKCEECSRMFKHARSLSSHQRTHLNKKSELLCVTCQKMFKRVSDRRTHEIIHMPEKPFKCSTCEKSFSHKTNLKSHEMIHTGEMPYVCSLCSRRFRQSSTYHRHLRNYHRSD.

The disordered stretch occupies residues 1–24 (MASQQAPAKDLQTNNLEFTPTDSS). The region spanning 37–119 (SAQLNFSPSN…RFMESLTDEC (83 aa)) is the SCAN box domain. C2H2-type zinc fingers lie at residues 395 to 417 (YKCEECSRMFKHARSLSSHQRTH), 424 to 446 (LLCVTCQKMFKRVSDRRTHEIIH), 452 to 474 (FKCSTCEKSFSHKTNLKSHEMIH), and 480 to 503 (YVCSLCSRRFRQSSTYHRHLRNYH).

Up-regulated in blastocyst outgrowths and is detectable in a mosaic fashion in ES cultures.

Its subcellular location is the nucleus. It is found in the chromosome. The protein localises to the telomere. Transcription factor required to regulate early development. Binds telomeres and plays a key role in genomic stability by regulating telomere elongation. Acts as an activator of spontaneous telomere sister chromatid exchange (T-SCE) and telomere elongation. The polypeptide is Zinc finger and SCAN domain containing protein 4F (Zscan4f) (Mus musculus (Mouse)).